The primary structure comprises 290 residues: Probable aquaporin PIP2-7 (290 aa).

2 helical membrane passes run 45-65 (ALIA…ATVI) and 79-99 (GVGY…LVYC). Residues 109–111 (NPA) carry the NPA 1 motif. A run of 3 helical transmembrane segments spans residues 128 to 148 (VLYV…VKGI), 168 to 188 (SAAG…YTVF), and 202 to 222 (IPVL…LATI). The NPA 2 motif lies at 230 to 232 (NPA). A helical transmembrane segment spans residues 252 to 272 (IFWVGPVIGAFLAAAYHKLVL).

The protein belongs to the MIP/aquaporin (TC 1.A.8) family. PIP (TC 1.A.8.11) subfamily. Expressed in roots.

The protein localises to the cell membrane. Its function is as follows. Aquaporins facilitate the transport of water and small neutral solutes across cell membranes. This chain is Probable aquaporin PIP2-7 (PIP2-7), found in Oryza sativa subsp. japonica (Rice).